The primary structure comprises 387 residues: tRNA-specific 2-thiouridylase MnmA (387 aa).

ATP-binding positions include 6-13 and L32; that span reads AMSGGVDS. C101 serves as the catalytic Nucleophile. C101 and C199 are joined by a disulfide. Position 125 (G125) interacts with ATP. Residues 148 to 150 are interaction with tRNA; sequence KDQ. C199 acts as the Cysteine persulfide intermediate in catalysis.

The protein belongs to the MnmA/TRMU family.

It is found in the cytoplasm. It carries out the reaction S-sulfanyl-L-cysteinyl-[protein] + uridine(34) in tRNA + AH2 + ATP = 2-thiouridine(34) in tRNA + L-cysteinyl-[protein] + A + AMP + diphosphate + H(+). Functionally, catalyzes the 2-thiolation of uridine at the wobble position (U34) of tRNA, leading to the formation of s(2)U34. This chain is tRNA-specific 2-thiouridylase MnmA, found in Clavibacter michiganensis subsp. michiganensis (strain NCPPB 382).